We begin with the raw amino-acid sequence, 348 residues long: Dihydroorotase (348 aa).

2 residues coordinate Zn(2+): His17 and His19. Substrate-binding positions include 19-21 and Asn45; that span reads HLR. Zn(2+) is bound by residues Lys103, His140, and His178. Position 103 is an N6-carboxylysine (Lys103). His140 is a binding site for substrate. Leu223 contacts substrate. Residue Asp251 coordinates Zn(2+). The active site involves Asp251. The substrate site is built by His255 and Ala267.

This sequence belongs to the metallo-dependent hydrolases superfamily. DHOase family. Class II DHOase subfamily. Homodimer. Zn(2+) is required as a cofactor.

It catalyses the reaction (S)-dihydroorotate + H2O = N-carbamoyl-L-aspartate + H(+). It participates in pyrimidine metabolism; UMP biosynthesis via de novo pathway; (S)-dihydroorotate from bicarbonate: step 3/3. Catalyzes the reversible cyclization of carbamoyl aspartate to dihydroorotate. The chain is Dihydroorotase from Klebsiella pneumoniae (strain 342).